A 217-amino-acid polypeptide reads, in one-letter code: Large ribosomal subunit protein uL3 (217 aa).

Belongs to the universal ribosomal protein uL3 family. In terms of assembly, part of the 50S ribosomal subunit. Forms a cluster with proteins L14 and L19.

In terms of biological role, one of the primary rRNA binding proteins, it binds directly near the 3'-end of the 23S rRNA, where it nucleates assembly of the 50S subunit. This chain is Large ribosomal subunit protein uL3, found in Mycobacterium marinum (strain ATCC BAA-535 / M).